The chain runs to 501 residues: MPRRPSGGGGGAGPAAAAVRKVPLRKLLRAASVACGVQFGWALQLSLLTPYVQELGIPHAFASLVWLCGPLSGLLVQPLVGHLSDRIAPAASPLGRRRPFIAAGAASIAAAVLTVGFSADLGRIFGDSITPGSTRLGAIIVYLVGFWLLDVGNNATQGPCRAFLADLTENDPRRTRIANAYFSLFMALGNILGYATGAYSGWYKIFPFTVTPSCSISCANLKSAFLLDIIILVVTTCITVASVQEPQSLGSDEADHPSTEQEAFLWELFGSFRYFTLPVWMVLIVTALTWIGWFPFILFDTDWMGREIYRGSPDDPSITQSYHDGVRMGSFGLMLNSVLLGFTSIVLEKLCRKWGAGLVWGVSNILMALCFVAMLVITYVAKNMDYPPSGVPPTGIVIASLVVFTILGAPLAITYSIPYAMAASRVENLGLGQGLAMGILNLAIVIPQVIVSLGSGPWDQLFGGGNAPAFAVAAAASFIGGLVAILGLPRARIASRRRGHR.

Over 1-31 (MPRRPSGGGGGAGPAAAAVRKVPLRKLLRAA) the chain is Cytoplasmic. The chain crosses the membrane as a helical span at residues 32-52 (SVACGVQFGWALQLSLLTPYV). At 53–55 (QEL) the chain is on the extracellular side. A helical membrane pass occupies residues 56–76 (GIPHAFASLVWLCGPLSGLLV). The Cytoplasmic segment spans residues 77–98 (QPLVGHLSDRIAPAASPLGRRR). A helical transmembrane segment spans residues 99-119 (PFIAAGAASIAAAVLTVGFSA). At 120-135 (DLGRIFGDSITPGSTR) the chain is on the extracellular side. A helical membrane pass occupies residues 136-156 (LGAIIVYLVGFWLLDVGNNAT). The Cytoplasmic segment spans residues 157–176 (QGPCRAFLADLTENDPRRTR). A helical membrane pass occupies residues 177 to 197 (IANAYFSLFMALGNILGYATG). Topologically, residues 198–222 (AYSGWYKIFPFTVTPSCSISCANLK) are extracellular. The chain crosses the membrane as a helical span at residues 223–243 (SAFLLDIIILVVTTCITVASV). Topologically, residues 244 to 278 (QEPQSLGSDEADHPSTEQEAFLWELFGSFRYFTLP) are cytoplasmic. Residues 279–299 (VWMVLIVTALTWIGWFPFILF) traverse the membrane as a helical segment. Residues 300 to 327 (DTDWMGREIYRGSPDDPSITQSYHDGVR) are Extracellular-facing. A helical membrane pass occupies residues 328 to 348 (MGSFGLMLNSVLLGFTSIVLE). The Cytoplasmic segment spans residues 349 to 356 (KLCRKWGA). A helical membrane pass occupies residues 357–377 (GLVWGVSNILMALCFVAMLVI). The Extracellular segment spans residues 378–394 (TYVAKNMDYPPSGVPPT). The helical transmembrane segment at 395-415 (GIVIASLVVFTILGAPLAITY) threads the bilayer. Topologically, residues 416 to 433 (SIPYAMAASRVENLGLGQ) are cytoplasmic. Residues 434 to 454 (GLAMGILNLAIVIPQVIVSLG) form a helical membrane-spanning segment. At 455-467 (SGPWDQLFGGGNA) the chain is on the extracellular side. A helical transmembrane segment spans residues 468 to 488 (PAFAVAAAASFIGGLVAILGL). Residues 489-501 (PRARIASRRRGHR) are Cytoplasmic-facing.

Belongs to the glycoside-pentoside-hexuronide (GPH) cation symporter transporter (TC 2.A.2.4) family. As to quaternary structure, homodimer. As to expression, expressed in source leaf blades.

The protein resides in the cell membrane. It functions in the pathway glycan biosynthesis; sucrose metabolism. Functionally, responsible for the transport of sucrose into the cell, with the concomitant uptake of protons (symport system). May also transport other glucosides. The chain is Sucrose transport protein SUT2 (SUT2) from Oryza sativa subsp. indica (Rice).